The following is a 39-amino-acid chain: Bacteriocin SRCAM 602 (39 aa).

It belongs to the bacteriocin class IIA/YGNGV family.

The protein localises to the secreted. Bacteriocin with antibacterial activity against C.jejuni. This Paenibacillus polymyxa (Bacillus polymyxa) protein is Bacteriocin SRCAM 602.